The sequence spans 730 residues: Pentatricopeptide repeat-containing protein At5g64320, mitochondrial (730 aa).

A mitochondrion-targeting transit peptide spans 1-18 (MVMLARSKLALDVSRRSQ). PPR repeat units follow at residues 110–144 (SFDV…GIVF), 145–175 (KESL…MRNV), 181–215 (TFKS…KIPP), 216–250 (TLFT…GCVP), 251–285 (NSVI…GCVP), 286–320 (DAET…GFAP), 321–351 (DDIT…IPKP), 352–387 (EIVI…GIVP), 388–422 (DVCT…GCKP), 423–457 (NVYS…GLKP), 458–492 (NTVG…GCKP), 493–527 (DVYT…GVVA), 528–562 (NTVT…GSPL), 563–597 (DEIT…GHAP), 598–632 (SNIS…GSTP), 633–667 (DIVT…GIPP), and 668–702 (DTVT…GFVP).

Belongs to the PPR family. P subfamily.

The protein resides in the mitochondrion. This Arabidopsis thaliana (Mouse-ear cress) protein is Pentatricopeptide repeat-containing protein At5g64320, mitochondrial.